The chain runs to 377 residues: Flagellar P-ring protein (377 aa).

Residues Met1–Ala33 form the signal peptide.

Belongs to the FlgI family. As to quaternary structure, the basal body constitutes a major portion of the flagellar organelle and consists of four rings (L,P,S, and M) mounted on a central rod.

The protein localises to the periplasm. It is found in the bacterial flagellum basal body. Functionally, assembles around the rod to form the L-ring and probably protects the motor/basal body from shearing forces during rotation. This is Flagellar P-ring protein from Nitrosospira multiformis (strain ATCC 25196 / NCIMB 11849 / C 71).